Reading from the N-terminus, the 428-residue chain is Chaperone SurA (428 aa).

Residues 1 to 19 (MNIWKTLLLGMLVTGSAVS) form the signal peptide. PpiC domains are found at residues 170 to 268 (SVEY…KIED) and 277 to 377 (VTEV…EVLD).

Its subcellular location is the periplasm. It carries out the reaction [protein]-peptidylproline (omega=180) = [protein]-peptidylproline (omega=0). Its function is as follows. Chaperone involved in the correct folding and assembly of outer membrane proteins. Recognizes specific patterns of aromatic residues and the orientation of their side chains, which are found more frequently in integral outer membrane proteins. May act in both early periplasmic and late outer membrane-associated steps of protein maturation. The polypeptide is Chaperone SurA (Vibrio vulnificus (strain YJ016)).